A 530-amino-acid polypeptide reads, in one-letter code: Tegument protein UL21 homolog (530 aa).

This sequence belongs to the alphaherpesvirinae UL21 protein family. As to quaternary structure, interacts (via C-terminus) with UL16.

It is found in the virion tegument. The protein resides in the host cytoplasm. Its subcellular location is the host nucleus. Functionally, may participate in DNA packaging/capsid maturation events. Promotes efficient incorporation of tegument proteins UL46, UL49, and US3 homologs into virions. May also play a role in capsid transport to the trans-Golgi network (TGN). The polypeptide is Tegument protein UL21 homolog (Equus caballus (Horse)).